We begin with the raw amino-acid sequence, 261 residues long: Early 31 kDa protein (261 aa).

Residues 230 to 261 (INKYSADTDEEEEEEEDNAEDTEEEEEEEADQ) form a disordered region. Positions 236–261 (DTDEEEEEEEDNAEDTEEEEEEEADQ) are enriched in acidic residues.

The sequence is that of Early 31 kDa protein from Frog virus 3 (isolate Goorha) (FV-3).